The chain runs to 170 residues: Ureidoglycolate lyase (170 aa).

This sequence belongs to the ureidoglycolate lyase family. Homodimer. It depends on Ni(2+) as a cofactor.

The catalysed reaction is (S)-ureidoglycolate = urea + glyoxylate. Its pathway is nitrogen metabolism; (S)-allantoin degradation. Catalyzes the catabolism of the allantoin degradation intermediate (S)-ureidoglycolate, generating urea and glyoxylate. Involved in the utilization of allantoin as nitrogen source. This chain is Ureidoglycolate lyase, found in Pseudomonas savastanoi pv. phaseolicola (strain 1448A / Race 6) (Pseudomonas syringae pv. phaseolicola (strain 1448A / Race 6)).